The primary structure comprises 532 residues: 2,3-bisphosphoglycerate-independent phosphoglycerate mutase (532 aa).

Mn(2+)-binding residues include D15 and S65. Catalysis depends on S65, which acts as the Phosphoserine intermediate. Substrate is bound by residues H126, R156–D157, R188, R194, R258–R261, and K331. Mn(2+)-binding residues include D398, H402, D439, H440, and H457.

This sequence belongs to the BPG-independent phosphoglycerate mutase family. In terms of assembly, monomer. Mn(2+) is required as a cofactor.

It carries out the reaction (2R)-2-phosphoglycerate = (2R)-3-phosphoglycerate. It participates in carbohydrate degradation; glycolysis; pyruvate from D-glyceraldehyde 3-phosphate: step 3/5. Its function is as follows. Catalyzes the interconversion of 2-phosphoglycerate and 3-phosphoglycerate. The chain is 2,3-bisphosphoglycerate-independent phosphoglycerate mutase from Trichodesmium erythraeum (strain IMS101).